The following is a 394-amino-acid chain: NAD(P)H-quinone oxidoreductase subunit H (394 aa).

It belongs to the complex I 49 kDa subunit family. In terms of assembly, NDH-1 can be composed of about 15 different subunits; different subcomplexes with different compositions have been identified which probably have different functions.

Its subcellular location is the cellular thylakoid membrane. The catalysed reaction is a plastoquinone + NADH + (n+1) H(+)(in) = a plastoquinol + NAD(+) + n H(+)(out). The enzyme catalyses a plastoquinone + NADPH + (n+1) H(+)(in) = a plastoquinol + NADP(+) + n H(+)(out). Its function is as follows. NDH-1 shuttles electrons from an unknown electron donor, via FMN and iron-sulfur (Fe-S) centers, to quinones in the respiratory and/or the photosynthetic chain. The immediate electron acceptor for the enzyme in this species is believed to be plastoquinone. Couples the redox reaction to proton translocation, and thus conserves the redox energy in a proton gradient. Cyanobacterial NDH-1 also plays a role in inorganic carbon-concentration. This Picosynechococcus sp. (strain ATCC 27264 / PCC 7002 / PR-6) (Agmenellum quadruplicatum) protein is NAD(P)H-quinone oxidoreductase subunit H.